A 439-amino-acid polypeptide reads, in one-letter code: Taxadien-5-alpha-ol O-acetyltransferase (439 aa).

Residues histidine 164 and aspartate 373 each act as proton acceptor in the active site.

This sequence belongs to the plant acyltransferase family.

The enzyme catalyses taxa-4(20),11-dien-5alpha-ol + acetyl-CoA = taxa-4(20),11-dien-5alpha-yl acetate + CoA. It functions in the pathway alkaloid biosynthesis; taxol biosynthesis; 10-deacetyl-2-debenzoylbaccatin III from taxa-4(20),11-dien-5alpha-ol: step 1/3. This chain is Taxadien-5-alpha-ol O-acetyltransferase, found in Taxus chinensis (Chinese yew).